A 278-amino-acid chain; its full sequence is DNA repair protein RecO (278 aa).

Residues 1–12 (MGTNDALTSTED) show a composition bias toward polar residues. The interval 1 to 41 (MGTNDALTSTEDAVTAGANDAPLPAPPEPPRKARRATSRTS) is disordered.

It belongs to the RecO family.

Its function is as follows. Involved in DNA repair and RecF pathway recombination. This Burkholderia orbicola (strain AU 1054) protein is DNA repair protein RecO.